The chain runs to 956 residues: UvrABC system protein A (956 aa).

Residue 33-40 participates in ATP binding; that stretch reads GLSGSGKS. The C4-type zinc-finger motif lies at 252-279; that stretch reads CPYCGFSVGELEPRMFSFNSPFGACPTC. ABC transporter domains follow at residues 309–587 and 607–936; these read WRPI…KNSI and GNGL…KYLK. Residue 639–646 participates in ATP binding; sequence GVSGSGKS. A C4-type zinc finger spans residues 738–764; it reads CEACKGDGIIKIEMHFLPDVYVPCEVC.

Belongs to the ABC transporter superfamily. UvrA family. In terms of assembly, forms a heterotetramer with UvrB during the search for lesions.

The protein localises to the cytoplasm. Functionally, the UvrABC repair system catalyzes the recognition and processing of DNA lesions. UvrA is an ATPase and a DNA-binding protein. A damage recognition complex composed of 2 UvrA and 2 UvrB subunits scans DNA for abnormalities. When the presence of a lesion has been verified by UvrB, the UvrA molecules dissociate. The chain is UvrABC system protein A from Listeria monocytogenes serovar 1/2a (strain ATCC BAA-679 / EGD-e).